Here is a 543-residue protein sequence, read N- to C-terminus: Adenosine deaminase 2 (543 aa).

An N-terminal signal peptide occupies residues 1-26 (MFLKFKNIFFIVLTLSIVFNGLIVNS). Over residues 31–54 (INNKNNNNNNNNKDLSSSESGSSS) the composition is skewed to low complexity. Residues 31–58 (INNKNNNNNNNNKDLSSSESGSSSDINP) are disordered. N-linked (GlcNAc...) asparagine glycosylation is present at Asn126. Zn(2+) contacts are provided by His144 and His146. A glycan (N-linked (GlcNAc...) asparagine) is linked at Asn179. Substrate is bound at residue 232 to 239 (WRKFDGIF). N-linked (GlcNAc...) asparagine glycans are attached at residues Asn309 and Asn326. Gly355 contacts substrate. A Zn(2+)-binding site is contributed by His389. Catalysis depends on Glu392, which acts as the Proton donor. Asn397 is a glycosylation site (N-linked (GlcNAc...) asparagine). His414 (proton acceptor) is an active-site residue. Residue Asp471 coordinates Zn(2+). Asp472 is a substrate binding site. N-linked (GlcNAc...) asparagine glycosylation is found at Asn508 and Asn514.

Belongs to the metallo-dependent hydrolases superfamily. Adenosine and AMP deaminases family. ADGF subfamily. It depends on Zn(2+) as a cofactor.

The protein resides in the secreted. It catalyses the reaction adenosine + H2O + H(+) = inosine + NH4(+). Its function is as follows. Adenosine deaminase that may contribute to the degradation of extracellular adenosine, a signaling molecule that controls a variety of cellular responses. May play a role in the regulation of cell proliferation. The sequence is that of Adenosine deaminase 2 from Dictyostelium discoideum (Social amoeba).